We begin with the raw amino-acid sequence, 635 residues long: 1-deoxy-D-xylulose-5-phosphate synthase (635 aa).

Residues histidine 79 and 120–122 (GHS) contribute to the thiamine diphosphate site. Aspartate 151 provides a ligand contact to Mg(2+). Residues 152–153 (GA), asparagine 182, tyrosine 291, and glutamate 372 each bind thiamine diphosphate. Position 182 (asparagine 182) interacts with Mg(2+).

The protein belongs to the transketolase family. DXPS subfamily. Homodimer. The cofactor is Mg(2+). Thiamine diphosphate serves as cofactor.

It catalyses the reaction D-glyceraldehyde 3-phosphate + pyruvate + H(+) = 1-deoxy-D-xylulose 5-phosphate + CO2. Its pathway is metabolic intermediate biosynthesis; 1-deoxy-D-xylulose 5-phosphate biosynthesis; 1-deoxy-D-xylulose 5-phosphate from D-glyceraldehyde 3-phosphate and pyruvate: step 1/1. Its function is as follows. Catalyzes the acyloin condensation reaction between C atoms 2 and 3 of pyruvate and glyceraldehyde 3-phosphate to yield 1-deoxy-D-xylulose-5-phosphate (DXP). This is 1-deoxy-D-xylulose-5-phosphate synthase from Xylella fastidiosa (strain M23).